We begin with the raw amino-acid sequence, 1295 residues long: Protein FORGETTER 1 (1295 aa).

Composition is skewed to pro residues over residues methionine 1–alanine 14, proline 75–isoleucine 89, and proline 162–glutamate 177. Disordered regions lie at residues methionine 1–alanine 20, arginine 68–glycine 107, leucine 153–arginine 204, and proline 626–aspartate 688. Residues glutamate 178–glycine 193 show a composition bias toward acidic residues. The Nuclear localization signal motif lies at arginine 643–proline 650. Residues aspartate 669–aspartate 688 show a composition bias toward acidic residues. The PHD-type zinc finger occupies phenylalanine 691–lysine 741.

It belongs to the SBNO family. As to quaternary structure, interacts with SWI/SNF and ISWI chromatin remodelers such as BRM, CHR11 and CHR17. Binds to histone H3.

It is found in the nucleus. Functionally, required for normal embryo development. Necessary to acquire heat stress (HS) memory, by modulating nucleosome occupancy and regulating heat-induced gene expression. Associates globally with the nucleosome-poor regions flanking the transcription units of expressed genes. Binds to the promoter regions, primarily to the proximal promoter just upstream of the transcriptional start sites (TSS) and somewhat more weakly to the region downstream of the transcription termination site (TTS), of actively expressed genes (e.g. HSA32, HSP18.2 and HSP22.0) in a heat-dependent fashion. In Arabidopsis thaliana (Mouse-ear cress), this protein is Protein FORGETTER 1.